Here is a 378-residue protein sequence, read N- to C-terminus: Signal recognition particle receptor FtsY (378 aa).

Residues 184–191 (GVNGTGKT), 266–270 (DTAGR), and 330–333 (TKLD) each bind GTP.

It belongs to the GTP-binding SRP family. FtsY subfamily. As to quaternary structure, part of the signal recognition particle protein translocation system, which is composed of SRP and FtsY. SRP is a ribonucleoprotein composed of Ffh and a 4.5S RNA molecule.

It is found in the cell membrane. It localises to the cytoplasm. The enzyme catalyses GTP + H2O = GDP + phosphate + H(+). Involved in targeting and insertion of nascent membrane proteins into the cytoplasmic membrane. Acts as a receptor for the complex formed by the signal recognition particle (SRP) and the ribosome-nascent chain (RNC). Interaction with SRP-RNC leads to the transfer of the RNC complex to the Sec translocase for insertion into the membrane, the hydrolysis of GTP by both Ffh and FtsY, and the dissociation of the SRP-FtsY complex into the individual components. In Buchnera aphidicola subsp. Acyrthosiphon pisum (strain APS) (Acyrthosiphon pisum symbiotic bacterium), this protein is Signal recognition particle receptor FtsY.